The primary structure comprises 319 residues: Acetyl-coenzyme A carboxylase carboxyl transferase subunit alpha (319 aa).

A CoA carboxyltransferase C-terminal domain is found at 35-296 (DLEKEIKQLE…KQRLLEQLKE (262 aa)).

Belongs to the AccA family. In terms of assembly, acetyl-CoA carboxylase is a heterohexamer composed of biotin carboxyl carrier protein (AccB), biotin carboxylase (AccC) and two subunits each of ACCase subunit alpha (AccA) and ACCase subunit beta (AccD).

The protein resides in the cytoplasm. The enzyme catalyses N(6)-carboxybiotinyl-L-lysyl-[protein] + acetyl-CoA = N(6)-biotinyl-L-lysyl-[protein] + malonyl-CoA. It functions in the pathway lipid metabolism; malonyl-CoA biosynthesis; malonyl-CoA from acetyl-CoA: step 1/1. In terms of biological role, component of the acetyl coenzyme A carboxylase (ACC) complex. First, biotin carboxylase catalyzes the carboxylation of biotin on its carrier protein (BCCP) and then the CO(2) group is transferred by the carboxyltransferase to acetyl-CoA to form malonyl-CoA. This chain is Acetyl-coenzyme A carboxylase carboxyl transferase subunit alpha, found in Aliivibrio fischeri (strain MJ11) (Vibrio fischeri).